Reading from the N-terminus, the 223-residue chain is Thymine-DNA glycosylase (223 aa).

[4Fe-4S] cluster-binding residues include C201, C208, C211, and C217.

This sequence belongs to the Nth/MutY family. [4Fe-4S] cluster serves as cofactor.

The catalysed reaction is Hydrolyzes mismatched double-stranded DNA and polynucleotides, releasing free thymine.. Its activity is regulated as follows. Thymine cleavage is completely inhibited by Ni(2+), Co(2+), Zn(2+), Cu(2+) and Mn(2+). Activity is not affected by Mg(2+) and Ca(2+). Functionally, DNA glycosylase that excises thymine from T/G mismatches. Also has a weak DNA glycosylase activity on uracil paired with various bases. The sequence is that of Thymine-DNA glycosylase from Aeropyrum pernix (strain ATCC 700893 / DSM 11879 / JCM 9820 / NBRC 100138 / K1).